Consider the following 558-residue polypeptide: Formate--tetrahydrofolate ligase 2 (558 aa).

Residue threonine 67–threonine 74 coordinates ATP.

The protein belongs to the formate--tetrahydrofolate ligase family.

The catalysed reaction is (6S)-5,6,7,8-tetrahydrofolate + formate + ATP = (6R)-10-formyltetrahydrofolate + ADP + phosphate. The protein operates within one-carbon metabolism; tetrahydrofolate interconversion. This chain is Formate--tetrahydrofolate ligase 2, found in Desulfitobacterium hafniense (strain Y51).